The chain runs to 632 residues: 2-oxoacid:ferredoxin oxidoreductase subunit alpha (632 aa).

The YPITP motif motif lies at 253–257; that stretch reads YPITP. Substrate is bound by residues Thr-256 and Arg-344.

As to quaternary structure, heterodimer composed of an alpha and a beta subunit.

The protein resides in the cytoplasm. It catalyses the reaction a 2-oxocarboxylate + 2 oxidized [2Fe-2S]-[ferredoxin] + CoA = an acyl-CoA + 2 reduced [2Fe-2S]-[ferredoxin] + CO2 + H(+). In terms of biological role, catalyzes the coenzyme A-dependent oxidative decarboxylation of different 2-oxoacids such as 2-oxoglutarate, pyruvate and 2-oxobutyrate to form their CoA derivatives. This chain is 2-oxoacid:ferredoxin oxidoreductase subunit alpha, found in Sulfolobus sp.